A 456-amino-acid chain; its full sequence is Cysteine--tRNA ligase (456 aa).

Position 28 (C28) interacts with Zn(2+). Residues 30–40 (ITVYDHCHLGH) carry the 'HIGH' region motif. Residues C209, H234, and E238 each contribute to the Zn(2+) site. The 'KMSKS' region signature appears at 266–270 (KMAKS). Residue K269 participates in ATP binding.

This sequence belongs to the class-I aminoacyl-tRNA synthetase family. As to quaternary structure, monomer. The cofactor is Zn(2+).

It localises to the cytoplasm. It catalyses the reaction tRNA(Cys) + L-cysteine + ATP = L-cysteinyl-tRNA(Cys) + AMP + diphosphate. In Legionella pneumophila (strain Corby), this protein is Cysteine--tRNA ligase.